Consider the following 582-residue polypeptide: Protein alan shepard (582 aa).

The segment covering 1 to 12 (MHPRYSPAPPPQ) has biased composition (pro residues). Residues 1–73 (MHPRYSPAPP…AAPPTSRSAF (73 aa)) are disordered. Phosphotyrosine is present on Tyr5. Residues 13–24 (QQQQMGGPPHQQ) are compositionally biased toward low complexity. Positions 25–35 (QGGGGGGGGSM) are enriched in gly residues. Polar residues predominate over residues 37 to 57 (GPSNAQQLPPQIPRSQNYSNG). Residues 58–72 (SSSSAAAAPPTSRSA) are compositionally biased toward low complexity. Tyr125 and Tyr142 each carry phosphotyrosine. A disordered region spans residues 164-225 (PATTTYGQRV…TVQNQNQQGG (62 aa)). Positions 178-225 (SPSNTNSSSSSNTGSQSGTLSTSLSNTTNTNTNMGPNGTVQNQNQQGG) are enriched in low complexity. 2 RRM domains span residues 231-304 (TNLY…MAKQ) and 310-389 (TNLY…FADG). A disordered region spans residues 555-582 (PMTDSEQASTAASPDEAYTQYPHQAAPK).

In terms of biological role, has a role in the perception of gravity. The protein is Protein alan shepard of Drosophila erecta (Fruit fly).